The following is a 207-amino-acid chain: Outer-membrane lipoprotein LolB (207 aa).

The signal sequence occupies residues 1–21; the sequence is MPMRKRHFYRLLPLASLLLAA. Cys-22 is lipidated: N-palmitoyl cysteine. A lipid anchor (S-diacylglycerol cysteine) is attached at Cys-22.

Belongs to the LolB family. Monomer.

The protein resides in the cell outer membrane. Functionally, plays a critical role in the incorporation of lipoproteins in the outer membrane after they are released by the LolA protein. This Yersinia pestis bv. Antiqua (strain Antiqua) protein is Outer-membrane lipoprotein LolB.